A 147-amino-acid polypeptide reads, in one-letter code: uncharacterized protein (147 aa).

The N-acetyltransferase domain maps to 7-147 (LEINYKTDEL…GHDVLVWAPK (141 aa)).

This is an uncharacterized protein from Staphylococcus haemolyticus (strain JCSC1435).